A 309-amino-acid chain; its full sequence is Probable ABC transporter permease protein YesP (309 aa).

The next 6 helical transmembrane spans lie at 29-49, 84-104, 114-134, 167-187, 217-237, and 275-295; these read FIIG…FLSF, FTYV…IAVI, IYRT…VAIM, ALWT…LIFL, LPIL…SAFM, and YASA…LILF. The ABC transmembrane type-1 domain occupies 80–294; that stretch reads LKVTFTYVLA…VIVGLITLIL (215 aa).

This sequence belongs to the binding-protein-dependent transport system permease family. MalFG subfamily.

It localises to the cell membrane. Part of a binding-protein-dependent transport system. Probably responsible for the translocation of the substrate across the membrane. The protein is Probable ABC transporter permease protein YesP (yesP) of Bacillus subtilis (strain 168).